A 78-amino-acid polypeptide reads, in one-letter code: Large ribosomal subunit protein bL28 (78 aa).

Belongs to the bacterial ribosomal protein bL28 family.

In Dichelobacter nodosus (strain VCS1703A), this protein is Large ribosomal subunit protein bL28.